Reading from the N-terminus, the 184-residue chain is MLNDIKNNAQTRMAKSIDALKHTLTSIRTGRATPALLDRVTVNAYGNASTPLNQVASISNADAHSLLVTPFDKSMIKEIEKGLYNAEFTPNTLGTAIRINMPPPTEERRKELAKQVQKEGEGAKIAIRNIRQDANKEIAKLDKDKAISEDEKKRGEDDIQKLTDANIKDVDKVVADKEKELLSV.

The protein belongs to the RRF family.

The protein localises to the cytoplasm. Responsible for the release of ribosomes from messenger RNA at the termination of protein biosynthesis. May increase the efficiency of translation by recycling ribosomes from one round of translation to another. This is Ribosome-recycling factor from Stenotrophomonas maltophilia (strain R551-3).